Reading from the N-terminus, the 302-residue chain is Deoxyhypusine hydroxylase (302 aa).

HEAT-like PBS-type repeat units lie at residues 23–49, 54–80, 87–113, 175–201, 206–232, and 239–265; these read ERFRALFTLKNIGGGAAIEAISKAFDD, LKHELAYCLGQMQDAQALDILTKVLKD, VRHEAAEAMGAIGHPDVLPILEEYKQD, DRYRAMFSLRNLRTEESVLAIAEGLKD, FRHEVAFVLGQLQEPCSIPFLQENLED, and VRHECAEALGAIATEDCIQILNRYAED. Positions 56, 57, 89, and 90 each coordinate Fe cation. Residues His208, Glu209, His241, and Glu242 each coordinate Fe cation.

The protein belongs to the deoxyhypusine hydroxylase family. Requires Fe(2+) as cofactor.

It is found in the endoplasmic reticulum membrane. It catalyses the reaction [eIF5A protein]-deoxyhypusine + AH2 + O2 = [eIF5A protein]-hypusine + A + H2O. The protein operates within protein modification; eIF5A hypusination. Its function is as follows. Catalyzes the hydroxylation of the N(6)-(4-aminobutyl)-L-lysine intermediate to form hypusine, an essential post-translational modification only found in mature eIF-5A factor. Essential for organismal viability and plays a role in a wide number of important processes such as cell growth and proliferation, and regulates induction of autophagy and protein synthesis. Has a role in eIF-5A-mediated translational control. This chain is Deoxyhypusine hydroxylase, found in Drosophila melanogaster (Fruit fly).